Consider the following 447-residue polypeptide: Chromosomal replication initiator protein DnaA (447 aa).

The domain I, interacts with DnaA modulators stretch occupies residues 1–66 (MSNRIISILK…SKAIKEAYGK (66 aa)). The tract at residues 66 to 102 (KNLDYEIVYETTEPEAFNKSNESYKGPLVKKKPLLIS) is domain II. Positions 103-319 (NLNANYTFEN…GVIIKLIVQS (217 aa)) are domain III, AAA+ region. 4 residues coordinate ATP: glycine 146, glycine 148, lysine 149, and threonine 150. The domain IV, binds dsDNA stretch occupies residues 320-447 (SINKERIGAA…NTMATSSAAG (128 aa)).

This sequence belongs to the DnaA family. As to quaternary structure, oligomerizes as a right-handed, spiral filament on DNA at oriC.

It is found in the cytoplasm. Plays an essential role in the initiation and regulation of chromosomal replication. ATP-DnaA binds to the origin of replication (oriC) to initiate formation of the DNA replication initiation complex once per cell cycle. Binds the DnaA box (a 9 base pair repeat at the origin) and separates the double-stranded (ds)DNA. Forms a right-handed helical filament on oriC DNA; dsDNA binds to the exterior of the filament while single-stranded (ss)DNA is stabiized in the filament's interior. The ATP-DnaA-oriC complex binds and stabilizes one strand of the AT-rich DNA unwinding element (DUE), permitting loading of DNA polymerase. After initiation quickly degrades to an ADP-DnaA complex that is not apt for DNA replication. Binds acidic phospholipids. The chain is Chromosomal replication initiator protein DnaA from Kosmotoga olearia (strain ATCC BAA-1733 / DSM 21960 / TBF 19.5.1).